The following is a 616-amino-acid chain: Protein cereblon (616 aa).

3 disordered regions span residues 1-39 (MDEE…DDSV), 63-137 (FGPS…AMPR), and 182-220 (SQER…DIDM). The segment covering 11 to 32 (AQEQEVAGSAGEAAAGPSGAEV) has biased composition (low complexity). Residues 96-107 (SEEDIVLDDGTE) show a composition bias toward acidic residues. A compositionally biased stretch (basic and acidic residues) spans 183 to 192 (QERRRSRNSD). Over residues 194 to 203 (VSPEAEDDEL) the composition is skewed to acidic residues. Residues 206 to 215 (HPPPPPPRPP) are compositionally biased toward pro residues. A Lon N-terminal domain is found at 257–482 (HMLIFLHQYI…LIGGILKEET (226 aa)). A CULT domain is found at 481-590 (ETLFYCRYCN…LAGSSVRIGK (110 aa)). Positions 486, 489, 555, and 558 each coordinate Zn(2+).

It belongs to the CRBN family. As to quaternary structure, likely a component of a DCX (DDB1-CUL4-X-box) protein ligase complex. May interact with pic/DDB1. In terms of processing, ubiquitinated.

It is found in the nucleus. It functions in the pathway protein modification; protein ubiquitination. Its function is as follows. Substrate recognition component of a DCX (DDB1-CUL4-X-box) E3 protein ligase complex that mediates the ubiquitination and subsequent proteasomal degradation of target proteins. Has an essential role in mediating growth by negatively regulating insulin signaling. It also has a role in maintaining presynaptic function in the neuromuscular junction synapses of third-instar larvae. The protein is Protein cereblon of Drosophila pseudoobscura pseudoobscura (Fruit fly).